The sequence spans 157 residues: Iron-sulfur cluster repair protein DnrN (157 aa).

The protein belongs to the RIC family.

It localises to the cytoplasm. Di-iron-containing protein involved in the repair of iron-sulfur clusters damaged by oxidative and nitrosative stress conditions. Required to repair damage caused by nitric oxide to FNR and NsrR transcription factors. The sequence is that of Iron-sulfur cluster repair protein DnrN (dnrN) from Neisseria gonorrhoeae.